Reading from the N-terminus, the 113-residue chain is MNTVRVTFLLVFVLAVSLGQADKDENRMEMQEKTEQGKSYLDFAENLLLQKLEELEAKLLEEDSEESRNSRQKRCIGEGVPCDENDPRCCSGLVCLKPTLHGIWYKSHYCYKK.

A signal peptide spans 1–21; sequence MNTVRVTFLLVFVLAVSLGQA. The propeptide occupies 22–74; it reads DKDENRMEMQEKTEQGKSYLDFAENLLLQKLEELEAKLLEEDSEESRNSRQKR. Positions 60 to 69 are enriched in basic and acidic residues; sequence LEEDSEESRN. The disordered stretch occupies residues 60-83; sequence LEEDSEESRNSRQKRCIGEGVPCD. Cystine bridges form between Cys-75–Cys-90, Cys-82–Cys-95, and Cys-89–Cys-110.

The protein belongs to the neurotoxin 14 (magi-1) family. 01 (HNTX-16) subfamily. As to expression, expressed by the venom gland.

The protein localises to the secreted. In terms of biological role, probable ion channel inhibitor. The sequence is that of U11-theraphotoxin-Hhn1j from Cyriopagopus hainanus (Chinese bird spider).